Reading from the N-terminus, the 356-residue chain is Alanine racemase, catabolic (356 aa).

K35 (proton acceptor; specific for D-alanine) is an active-site residue. Residue K35 is modified to N6-(pyridoxal phosphate)lysine. Residue R130 participates in substrate binding. Catalysis depends on Y253, which acts as the Proton acceptor; specific for L-alanine. Position 301 (M301) interacts with substrate.

It belongs to the alanine racemase family. The cofactor is pyridoxal 5'-phosphate.

It carries out the reaction L-alanine = D-alanine. Functionally, isomerizes L-alanine to D-alanine which is then oxidized to pyruvate by DadA. The protein is Alanine racemase, catabolic (dadB) of Klebsiella aerogenes (Enterobacter aerogenes).